Reading from the N-terminus, the 555-residue chain is Formate--tetrahydrofolate ligase (555 aa).

Residue Thr64–Thr71 coordinates ATP.

This sequence belongs to the formate--tetrahydrofolate ligase family.

The catalysed reaction is (6S)-5,6,7,8-tetrahydrofolate + formate + ATP = (6R)-10-formyltetrahydrofolate + ADP + phosphate. It functions in the pathway one-carbon metabolism; tetrahydrofolate interconversion. This Parabacteroides distasonis (strain ATCC 8503 / DSM 20701 / CIP 104284 / JCM 5825 / NCTC 11152) protein is Formate--tetrahydrofolate ligase.